A 486-amino-acid chain; its full sequence is E3 ubiquitin-protein ligase TRIM58 (486 aa).

An RING-type zinc finger spans residues 16 to 61 (CPVCLDFLQEPVSVDCGHSFCLRCISEFCEKSDGAQGGVYACPQCR). A B box-type zinc finger spans residues 91–132 (PGARRCARHGEDLSRFCEEDEAALCWVCDAGPEHRTHRTAPL). Zn(2+) is bound by residues Cys-96, His-99, Cys-118, and His-124. The stretch at 193–242 (LAQEEQRQLRRLEAEERATLQRLRESKSRLVQQSKALKELADELQERCQR) forms a coiled coil. The region spanning 273–463 (LKTACCIPGR…TPLILPPTTI (191 aa)) is the B30.2/SPRY domain.

This sequence belongs to the TRIM/RBCC family. As to expression, expressed in erythroblasts.

It catalyses the reaction S-ubiquitinyl-[E2 ubiquitin-conjugating enzyme]-L-cysteine + [acceptor protein]-L-lysine = [E2 ubiquitin-conjugating enzyme]-L-cysteine + N(6)-ubiquitinyl-[acceptor protein]-L-lysine.. It functions in the pathway protein modification; protein ubiquitination. Functionally, E3 ubiquitin ligase induced during late erythropoiesis. Directly binds and ubiquitinates the intermediate chain of the microtubule motor dynein (DYNC1LI1/DYNC1LI2), stimulating the degradation of the dynein holoprotein complex. May participate in the erythroblast enucleation process through regulation of nuclear polarization. The protein is E3 ubiquitin-protein ligase TRIM58 (TRIM58) of Homo sapiens (Human).